The sequence spans 560 residues: MARSRSISGYGIWKYLNPAYYLRRPRRLALLFIVFVSVSMLVWDRINLAREHEVEVFKLNEEVSRLEQMLEELNGGVGNKPLKTLKDAPEDPVDKQRRQKVKEAMIHAWSSYEKYAWGKDELQPRTKDGTDSFGGLGATMVDSLDTLYIMGLDEQFQKAREWVASSLDFDKDYDASMFETTIRVVGGLLSAYDLSGDKMFLEKAKDIADRLLPAWNTPTGIPYNIINLRNGNAHNPSWAAGGDSILADSGTEQLEFIALSQRTGDPKYQQKVEKVITELNKNFPADGLLPIYINPDNANPSYSTTTFGAMGDSFYEYLLKVWVQGNKTSAVKPYRDMWEKSMKGLLSLVKKSTPSSFTYICEKNGNNLIDKMDELACFAPGMLALGASGYGPDEEKKFLSLAGELAWTCYNFYQSTPTKLAGENYFFTAGQDMSVGTSWNILRPETVESLFYLWRLTGNKTYQEWGWNIFQAFEKNSRVESGYVGLKDVNTGAKDNKMQSFFLAETLKYLYLLFSPSSVISLDEWVFNTEAHPLKIVARNDPRKPTIALRQRKFGHQINV.

Topologically, residues 1–27 (MARSRSISGYGIWKYLNPAYYLRRPRR) are cytoplasmic. Residues 28-47 (LALLFIVFVSVSMLVWDRIN) form a helical; Signal-anchor for type II membrane protein membrane-spanning segment. Positions 47 to 80 (NLAREHEVEVFKLNEEVSRLEQMLEELNGGVGNK) form a coiled coil. The Lumenal segment spans residues 48-560 (LAREHEVEVF…QRKFGHQINV (513 aa)). Glutamate 179 (proton donor) is an active-site residue. Aspartate 312 is an active-site residue. Asparagine 326 carries an N-linked (GlcNAc...) asparagine glycan. An intrachain disulfide couples cysteine 377 to cysteine 409. The active-site Proton donor is glutamate 423. Glutamate 445 is an active-site residue. Asparagine 459 is a glycosylation site (N-linked (GlcNAc...) asparagine). Threonine 529 is a binding site for Ca(2+).

The protein belongs to the glycosyl hydrolase 47 family. Requires Ca(2+) as cofactor. Mn(2+) serves as cofactor. Mg(2+) is required as a cofactor. As to expression, expressed in flowers, siliques, stems, leaves, roots, pollen grains, shoot apical meristems, hypocotyls and upper region of the root.

The protein localises to the golgi apparatus membrane. The enzyme catalyses N(4)-(alpha-D-Man-(1-&gt;2)-alpha-D-Man-(1-&gt;2)-alpha-D-Man-(1-&gt;3)-[alpha-D-Man-(1-&gt;2)-alpha-D-Man-(1-&gt;3)-[alpha-D-Man-(1-&gt;2)-alpha-D-Man-(1-&gt;6)]-alpha-D-Man-(1-&gt;6)]-beta-D-Man-(1-&gt;4)-beta-D-GlcNAc-(1-&gt;4)-beta-D-GlcNAc)-L-asparaginyl-[protein] (N-glucan mannose isomer 9A1,2,3B1,2,3) + 4 H2O = N(4)-(alpha-D-Man-(1-&gt;3)-[alpha-D-Man-(1-&gt;3)-[alpha-D-Man-(1-&gt;6)]-alpha-D-Man-(1-&gt;6)]-beta-D-Man-(1-&gt;4)-beta-D-GlcNAc-(1-&gt;4)-beta-D-GlcNAc)-L-asparaginyl-[protein] (N-glucan mannose isomer 5A1,2) + 4 beta-D-mannose. It carries out the reaction N(4)-(alpha-D-Man-(1-&gt;2)-alpha-D-Man-(1-&gt;2)-alpha-D-Man-(1-&gt;3)-[alpha-D-Man-(1-&gt;3)-[alpha-D-Man-(1-&gt;2)-alpha-D-Man-(1-&gt;6)]-alpha-D-Man-(1-&gt;6)]-beta-D-Man-(1-&gt;4)-beta-D-GlcNAc-(1-&gt;4)-beta-D-GlcNAc)-L-asparaginyl-[protein] (N-glucan mannose isomer 8A1,2,3B1,3) + 3 H2O = N(4)-(alpha-D-Man-(1-&gt;3)-[alpha-D-Man-(1-&gt;3)-[alpha-D-Man-(1-&gt;6)]-alpha-D-Man-(1-&gt;6)]-beta-D-Man-(1-&gt;4)-beta-D-GlcNAc-(1-&gt;4)-beta-D-GlcNAc)-L-asparaginyl-[protein] (N-glucan mannose isomer 5A1,2) + 3 beta-D-mannose. It catalyses the reaction N(4)-(alpha-D-Man-(1-&gt;2)-alpha-D-Man-(1-&gt;2)-alpha-D-Man-(1-&gt;3)-[alpha-D-Man-(1-&gt;2)-alpha-D-Man-(1-&gt;3)-[alpha-D-Man-(1-&gt;2)-alpha-D-Man-(1-&gt;6)]-alpha-D-Man-(1-&gt;6)]-beta-D-Man-(1-&gt;4)-beta-D-GlcNAc-(1-&gt;4)-beta-D-GlcNAc)-L-asparaginyl-[protein] (N-glucan mannose isomer 9A1,2,3B1,2,3) + H2O = N(4)-(alpha-D-Man-(1-&gt;2)-alpha-D-Man-(1-&gt;2)-alpha-D-Man-(1-&gt;3)-[alpha-D-Man-(1-&gt;3)-[alpha-D-Man-(1-&gt;2)-alpha-D-Man-(1-&gt;6)]-alpha-D-Man-(1-&gt;6)]-beta-D-Man-(1-&gt;4)-beta-D-GlcNAc-(1-&gt;4)-beta-D-GlcNAc)-L-asparaginyl-[protein] (N-glucan mannose isomer 8A1,2,3B1,3) + beta-D-mannose. It participates in protein modification; protein glycosylation. Inhibited by kifunensine and 1-deoxymannojirimycin, but not by swainsonine. In terms of biological role, class I alpha-mannosidase essential for early N-glycan processing. Progressively trims alpha-1,2-linked mannose residues. Produces Man(5)GlcNAc(2) from Man(8)GlcNAc(2), but only Man(6)GlcNAc(2) from Man(9)GlcNAc(2). Has difficulty acting on the terminal mannose of the b-branch. Involved in root development and cell wall biosynthesis. This Arabidopsis thaliana (Mouse-ear cress) protein is Mannosyl-oligosaccharide 1,2-alpha-mannosidase MNS1 (MNS1).